A 428-amino-acid chain; its full sequence is FAD-dependent monooxygenase kojA (428 aa).

Residues Arg52–Pro60 and Ser328–Val329 each bind FAD.

This sequence belongs to the aromatic-ring hydroxylase family. FAD serves as cofactor.

Its function is as follows. Probable FAD-dependent monooxygenase; part of the gene cluster that mediates the biosynthesis of 5-hydroxy-2-hydroxymethyl-1,4-pyrone, also know as kojic acid, a by-product in the fermentation process of malting rice that acts as a chelation agent. Glucose might be converted to kojic acid by a combination of dehydrogenase and dehydratase reactions involving kojA and probably additional enzymes. The protein is FAD-dependent monooxygenase kojA of Aspergillus flavus (strain ATCC 200026 / FGSC A1120 / IAM 13836 / NRRL 3357 / JCM 12722 / SRRC 167).